Here is a 364-residue protein sequence, read N- to C-terminus: MGDNMDFSEHYGNFSENYVTESYGEFDLYYDPLNETSLSEQGHRSIWVLSIVLCSIACVLGITGNAFVIWIAGVKMKRTVNTIWFVNLAAADLLCCVSIPFSIADIILNSHWPYGEAMCKILPSMVVLNMFASVFTLVLISLDRFALVILPVWAQNHRSITLAWLLCGLVWVLGLLLSLPSMIYREIVVHDDMNITLCIYNHLQDKTEGNQSAIKAIHVTRLILGFLIPLLVIAVCYLLIGRRVSSGRFKSQRAFQIILVVVTTFFVCWLPYHVIGLVIEYGKEASQVMARALDPLAISLAYVNSCLNPVLYVFMGQDFKERVRVSLRKIFEKVFSEDVTLRSSVYSKGQSQLSRATNSSEAQV.

Residues 1-50 (MGDNMDFSEHYGNFSENYVTESYGEFDLYYDPLNETSLSEQGHRSIWVLS) are Extracellular-facing. N-linked (GlcNAc...) asparagine glycans are attached at residues Asn13 and Asn34. The chain crosses the membrane as a helical span at residues 51–71 (IVLCSIACVLGITGNAFVIWI). The Cytoplasmic segment spans residues 72 to 82 (AGVKMKRTVNT). The helical transmembrane segment at 83 to 103 (IWFVNLAAADLLCCVSIPFSI) threads the bilayer. At 104–120 (ADIILNSHWPYGEAMCK) the chain is on the extracellular side. Cys119 and Cys198 are joined by a disulfide. The chain crosses the membrane as a helical span at residues 121-141 (ILPSMVVLNMFASVFTLVLIS). The Cytoplasmic portion of the chain corresponds to 142–159 (LDRFALVILPVWAQNHRS). The helical transmembrane segment at 160–180 (ITLAWLLCGLVWVLGLLLSLP) threads the bilayer. The Extracellular portion of the chain corresponds to 181 to 220 (SMIYREIVVHDDMNITLCIYNHLQDKTEGNQSAIKAIHVT). The helical transmembrane segment at 221-241 (RLILGFLIPLLVIAVCYLLIG) threads the bilayer. Residues 242-256 (RRVSSGRFKSQRAFQ) lie on the Cytoplasmic side of the membrane. Residues 257-277 (IILVVVTTFFVCWLPYHVIGL) traverse the membrane as a helical segment. Over 278–295 (VIEYGKEASQVMARALDP) the chain is Extracellular. A helical transmembrane segment spans residues 296-316 (LAISLAYVNSCLNPVLYVFMG). At 317–364 (QDFKERVRVSLRKIFEKVFSEDVTLRSSVYSKGQSQLSRATNSSEAQV) the chain is on the cytoplasmic side.

Belongs to the G-protein coupled receptor 1 family.

Its subcellular location is the cell membrane. Receptor for the chemotactic and inflammatory peptide anaphylatoxin C3a. This receptor stimulates chemotaxis, granule enzyme release and superoxide anion production. The polypeptide is C3a anaphylatoxin chemotactic receptor (c3ar1) (Oncorhynchus mykiss (Rainbow trout)).